The chain runs to 429 residues: Serine hydroxymethyltransferase (429 aa).

Residues leucine 126 and 130-132 each bind (6S)-5,6,7,8-tetrahydrofolate; that span reads GHL. Residue lysine 235 is modified to N6-(pyridoxal phosphate)lysine. 359–361 is a (6S)-5,6,7,8-tetrahydrofolate binding site; the sequence is SPF.

Belongs to the SHMT family. In terms of assembly, homodimer. Pyridoxal 5'-phosphate is required as a cofactor.

The protein resides in the cytoplasm. It catalyses the reaction (6R)-5,10-methylene-5,6,7,8-tetrahydrofolate + glycine + H2O = (6S)-5,6,7,8-tetrahydrofolate + L-serine. It participates in one-carbon metabolism; tetrahydrofolate interconversion. It functions in the pathway amino-acid biosynthesis; glycine biosynthesis; glycine from L-serine: step 1/1. In terms of biological role, catalyzes the reversible interconversion of serine and glycine with tetrahydrofolate (THF) serving as the one-carbon carrier. This reaction serves as the major source of one-carbon groups required for the biosynthesis of purines, thymidylate, methionine, and other important biomolecules. Also exhibits THF-independent aldolase activity toward beta-hydroxyamino acids, producing glycine and aldehydes, via a retro-aldol mechanism. This is Serine hydroxymethyltransferase from Synechococcus sp. (strain CC9311).